Reading from the N-terminus, the 207-residue chain is Ribosomal RNA small subunit methyltransferase G (207 aa).

Residues Gly-76, Gln-81, 127–128 (VE), and Arg-141 each bind S-adenosyl-L-methionine.

It belongs to the methyltransferase superfamily. RNA methyltransferase RsmG family.

It is found in the cytoplasm. The enzyme catalyses guanosine(527) in 16S rRNA + S-adenosyl-L-methionine = N(7)-methylguanosine(527) in 16S rRNA + S-adenosyl-L-homocysteine. Functionally, specifically methylates the N7 position of guanine in position 527 of 16S rRNA. This chain is Ribosomal RNA small subunit methyltransferase G, found in Neisseria gonorrhoeae (strain ATCC 700825 / FA 1090).